A 236-amino-acid polypeptide reads, in one-letter code: Purine nucleoside phosphorylase DeoD-type (236 aa).

Residue H5 participates in a purine D-ribonucleoside binding. Residues G21, R25, R44, and 88 to 91 (RIGS) contribute to the phosphate site. Residues 180–182 (EME) and 204–205 (SD) each bind a purine D-ribonucleoside. The Proton donor role is filled by D205.

It belongs to the PNP/UDP phosphorylase family. Homohexamer; trimer of homodimers.

It carries out the reaction a purine D-ribonucleoside + phosphate = a purine nucleobase + alpha-D-ribose 1-phosphate. The catalysed reaction is a purine 2'-deoxy-D-ribonucleoside + phosphate = a purine nucleobase + 2-deoxy-alpha-D-ribose 1-phosphate. Its function is as follows. Catalyzes the reversible phosphorolytic breakdown of the N-glycosidic bond in the beta-(deoxy)ribonucleoside molecules, with the formation of the corresponding free purine bases and pentose-1-phosphate. The protein is Purine nucleoside phosphorylase DeoD-type of Chromobacterium violaceum (strain ATCC 12472 / DSM 30191 / JCM 1249 / CCUG 213 / NBRC 12614 / NCIMB 9131 / NCTC 9757 / MK).